The following is a 225-amino-acid chain: MAERLRIAVDGPAGAGKGTVCRAVARRYQWAYLDTGAIYRAVALHALNSENFEETSLAQWAAQMDFRFEVDAQGDAHAFLEGTEVTNKLRDEQVGETASQVAAMPAVRTALLDFQRNYGSPQSVILDGRDVGTVVLPDADLKIYLTASLQARAQRRTLELQGKGESVSMDRIKSRIEERDARDQSRATAPLAAAPDAQTVDTTYLSQTESIETVARLVASLLEKP.

11–19 contacts ATP; sequence GPAGAGKGT. Residues 169–185 are compositionally biased toward basic and acidic residues; it reads MDRIKSRIEERDARDQS. Residues 169-195 are disordered; sequence MDRIKSRIEERDARDQSRATAPLAAAP.

The protein belongs to the cytidylate kinase family. Type 1 subfamily.

It is found in the cytoplasm. It carries out the reaction CMP + ATP = CDP + ADP. It catalyses the reaction dCMP + ATP = dCDP + ADP. In Magnetococcus marinus (strain ATCC BAA-1437 / JCM 17883 / MC-1), this protein is Cytidylate kinase.